Consider the following 330-residue polypeptide: MRKIAIDAMGGENAPEAIVEAVLKAKPELPEDKFIFFGDEGKMKELLPADDDQIEIVATTEVILDEDEPVKAMRTKKDSSMVVAANWVKEGKADALLSLGNTGALLTCGIFIVGRIKGVARPGLMPTMPVESSDDGFNIIDVGANATSKPEYLLQWAEMASCYAEKVRGVSKPRVALLNNGAEFDKGDDLHKEVYQLLQDSSLNFTGNIEGHELLQGKADVVVTDGFTGNAVLKSIEGTGSVIIHMLKDGLLNNGVKAKLGALLAKDALKSVASRFDKDKYGGAVLLGLNSPVVKQHGRSDARAVYYAVKQIDKILTEDLTNTFKQEFSK.

It belongs to the PlsX family. As to quaternary structure, homodimer. Probably interacts with PlsY.

It localises to the cytoplasm. The enzyme catalyses a fatty acyl-[ACP] + phosphate = an acyl phosphate + holo-[ACP]. Its pathway is lipid metabolism; phospholipid metabolism. In terms of biological role, catalyzes the reversible formation of acyl-phosphate (acyl-PO(4)) from acyl-[acyl-carrier-protein] (acyl-ACP). This enzyme utilizes acyl-ACP as fatty acyl donor, but not acyl-CoA. The sequence is that of Phosphate acyltransferase from Lactobacillus delbrueckii subsp. bulgaricus (strain ATCC BAA-365 / Lb-18).